The following is a 108-amino-acid chain: Large ribosomal subunit protein uL24 (108 aa).

The interval 46–65 is disordered; it reads RHTRVQQSSRGSQSGGIVTQ. A compositionally biased stretch (low complexity) spans 51–61; the sequence is QQSSRGSQSGG.

The protein belongs to the universal ribosomal protein uL24 family. In terms of assembly, part of the 50S ribosomal subunit.

Its function is as follows. One of two assembly initiator proteins, it binds directly to the 5'-end of the 23S rRNA, where it nucleates assembly of the 50S subunit. One of the proteins that surrounds the polypeptide exit tunnel on the outside of the subunit. In Parafrankia sp. (strain EAN1pec), this protein is Large ribosomal subunit protein uL24.